The sequence spans 352 residues: Transcription factor MYB86 (352 aa).

2 HTH myb-type domains span residues Lys9 to Leu61 and Arg62 to Leu116. 2 DNA-binding regions (H-T-H motif) span residues Trp37–Leu61 and Trp89–Leu112.

As to expression, expressed in stems, flowers and seeds. Weakly expressed in leaves and roots.

It localises to the nucleus. In terms of biological role, probable transcription factor. The polypeptide is Transcription factor MYB86 (MYB86) (Arabidopsis thaliana (Mouse-ear cress)).